The sequence spans 136 residues: Blasticidin-S acetyltransferase (136 aa).

Residues 1–136 (MLSLPRLQTV…ITSHLLVKEL (136 aa)) form the N-acetyltransferase domain.

Confers resistance to blasticidin S antibiotic. The protein is Blasticidin-S acetyltransferase (bls) of Streptomyces morookaense (Streptoverticillium morookaense).